The primary structure comprises 111 residues: MISDKIKLTAKDILEKEFKTGMRGYQQEEVDKFLDMIIKDYEAFHKEFEQLKQQNARLKRELEEQKLAVTQVPQQPVQTPVAQPVYNNTNTDILKRLSNLEKAVFGSKLYE.

Residues 38 to 72 adopt a coiled-coil conformation; sequence IKDYEAFHKEFEQLKQQNARLKRELEEQKLAVTQV.

The protein belongs to the GpsB family. As to quaternary structure, forms polymers through the coiled coil domains. Interacts with PBP1, MreC and EzrA.

The protein resides in the cytoplasm. Divisome component that associates with the complex late in its assembly, after the Z-ring is formed, and is dependent on DivIC and PBP2B for its recruitment to the divisome. Together with EzrA, is a key component of the system that regulates PBP1 localization during cell cycle progression. Its main role could be the removal of PBP1 from the cell pole after pole maturation is completed. Also contributes to the recruitment of PBP1 to the division complex. Not essential for septum formation. The sequence is that of Cell cycle protein GpsB from Bacillus cereus (strain G9842).